Reading from the N-terminus, the 573-residue chain is WRKY transcription factor SUSIBA2 (573 aa).

Disordered stretches follow at residues 56 to 133 (AHPD…CSRE) and 157 to 192 (PAEV…DDGY). The span at 64-85 (PRDKSVRNAHEDRGSRDFEFKP) shows a compositional bias: basic and acidic residues. Over residues 108–122 (MQNQSMNPSSSSSNM) the composition is skewed to low complexity. Residues 163 to 182 (SEPQQMNSSDNAMQEPQSEN) are compositionally biased toward polar residues. Basic and acidic residues predominate over residues 183–192 (VADKSADDGY). The segment at residues 183 to 247 (VADKSADDGY…YKGRHNHPKP (65 aa)) is a DNA-binding region (WRKY 1). 4 residues coordinate Zn(2+): cysteine 214, cysteine 219, histidine 242, and histidine 244. The interval 240–332 (GRHNHPKPQP…EDLESKRRKM (93 aa)) is disordered. The segment covering 263–277 (GEERYDGASAADDKS) has biased composition (basic and acidic residues). Residues 357–422 (SEVDILDDGY…YEGKHNHEVP (66 aa)) constitute a DNA-binding region (WRKY 2). Zn(2+) contacts are provided by cysteine 388, cysteine 393, histidine 417, and histidine 419.

This sequence belongs to the WRKY group I family. In terms of tissue distribution, expressed in endosperm, but not in leaves.

It is found in the nucleus. In terms of biological role, transcription factor involved in starch synthesis. Acts as a transcriptional activator in sugar signaling. Interacts specifically with the SURE and W-box elements, but not with the SP8a element. The protein is WRKY transcription factor SUSIBA2 of Hordeum vulgare (Barley).